Here is a 295-residue protein sequence, read N- to C-terminus: Enolase-phosphatase E1 (295 aa).

2 residues coordinate Mg(2+): Asp20 and Glu22. Substrate is bound by residues Ser153–Ser154 and Lys187. Asp212 contacts Mg(2+). A disordered region spans residues Glu260 to Lys295.

This sequence belongs to the HAD-like hydrolase superfamily. MasA/MtnC family. In terms of assembly, monomer. The cofactor is Mg(2+).

It is found in the cytoplasm. It localises to the nucleus. The enzyme catalyses 5-methylsulfanyl-2,3-dioxopentyl phosphate + H2O = 1,2-dihydroxy-5-(methylsulfanyl)pent-1-en-3-one + phosphate. It functions in the pathway amino-acid biosynthesis; L-methionine biosynthesis via salvage pathway; L-methionine from S-methyl-5-thio-alpha-D-ribose 1-phosphate: step 3/6. It participates in amino-acid biosynthesis; L-methionine biosynthesis via salvage pathway; L-methionine from S-methyl-5-thio-alpha-D-ribose 1-phosphate: step 4/6. Its function is as follows. Bifunctional enzyme that catalyzes the enolization of 2,3-diketo-5-methylthiopentyl-1-phosphate (DK-MTP-1-P) into the intermediate 2-hydroxy-3-keto-5-methylthiopentenyl-1-phosphate (HK-MTPenyl-1-P), which is then dephosphorylated to form the acireductone 1,2-dihydroxy-3-keto-5-methylthiopentene (DHK-MTPene). The polypeptide is Enolase-phosphatase E1 (Anopheles gambiae (African malaria mosquito)).